Consider the following 114-residue polypeptide: Biofilm growth-associated repressor (114 aa).

An HTH arsR-type domain is found at 17 to 111 (DMEKRANEVA…ALYTIFCTQE (95 aa)). The H-T-H motif DNA-binding region spans 51–74 (VGELEQQIGIGQPTLSQQLGVLRE).

In terms of biological role, represses an operon that probably comprises itself, PD_1892, PD_1893, PD_1894 and blh. Binds to a palindromic AT-rich sequence spanning the -10 region of the blh promoter and blocks transcription of the operon. This Xylella fastidiosa (strain Temecula1 / ATCC 700964) protein is Biofilm growth-associated repressor (bigR).